We begin with the raw amino-acid sequence, 511 residues long: Inositol-3-phosphate synthase isozyme 1 (511 aa).

Residues glycine 71, glycine 72, asparagine 73, asparagine 74, aspartate 144, isoleucine 181, glutamine 191, arginine 194, threonine 231, alanine 232, asparagine 233, threonine 234, glycine 282, serine 283, aspartate 307, serine 310, asparagine 341, asparagine 342, aspartate 343, lysine 356, alanine 394, aspartate 395, aspartate 423, and serine 424 each coordinate NAD(+).

This sequence belongs to the myo-inositol 1-phosphate synthase family. Homotrimer or homotetramer. Interacts with ATXR5 and ATXR6. NAD(+) serves as cofactor. As to expression, expressed in siliques, leaves, roots, seed endosperm, but not in embryos. Highest expression in leaves, but restricted to vascular tissue in older leaves.

Its subcellular location is the cytoplasm. The protein resides in the cytosol. The protein localises to the nucleus. The enzyme catalyses D-glucose 6-phosphate = 1D-myo-inositol 3-phosphate. It participates in polyol metabolism; myo-inositol biosynthesis; myo-inositol from D-glucose 6-phosphate: step 1/2. Its function is as follows. Key enzyme in myo-inositol biosynthesis pathway that catalyzes the conversion of glucose 6-phosphate to 1-myo-inositol 1-phosphate in a NAD-dependent manner. Catalyzes the majority of myo-inositol synthesis required for plant growth and development. Acts as a repressor of programmed cell death and protects plant cells against cell death under high light intensity or long days. Controls its own transcription by inhibiting ATXR6 activity. Reduces the deposition of inhibitory histone marks on its own promoter. This is Inositol-3-phosphate synthase isozyme 1 (IPS1) from Arabidopsis thaliana (Mouse-ear cress).